We begin with the raw amino-acid sequence, 23 residues long: KAEEEVEKNKEEAEEKAEKKIAE.

The interval 1-23 is disordered; the sequence is KAEEEVEKNKEEAEEKAEKKIAE. Residues 7–23 are compositionally biased toward basic and acidic residues; sequence EKNKEEAEEKAEKKIAE.

In terms of biological role, gp22 functions in head assembly. Functionally, internal peptide VII: Cleavage product of Gp22 that is incorporated into the mature phage head. This is Major prohead-scaffolding core protein Gp22 (22) from Enterobacteria phage T6 (Bacteriophage T6).